Reading from the N-terminus, the 226-residue chain is AA9 family lytic polysaccharide monooxygenase E (226 aa).

The first 18 residues, 1 to 18 (MLANGAIVFLAAALGVSG), serve as a signal peptide directing secretion. Histidine 19 is a binding site for Cu(2+). Intrachain disulfides connect cysteine 56-cysteine 174 and cysteine 144-cysteine 226. The N-linked (GlcNAc...) asparagine glycan is linked to asparagine 69. Histidine 86 is a binding site for Cu(2+). Residues histidine 160 and glutamine 169 each coordinate O2. Tyrosine 171 lines the Cu(2+) pocket.

The protein belongs to the polysaccharide monooxygenase AA9 family. The cofactor is Cu(2+).

The protein localises to the secreted. The catalysed reaction is [(1-&gt;4)-beta-D-glucosyl]n+m + reduced acceptor + O2 = 4-dehydro-beta-D-glucosyl-[(1-&gt;4)-beta-D-glucosyl]n-1 + [(1-&gt;4)-beta-D-glucosyl]m + acceptor + H2O.. Its function is as follows. Lytic polysaccharide monooxygenase (LPMO) that depolymerizes crystalline and amorphous polysaccharides via the oxidation of scissile alpha- or beta-(1-4)-glycosidic bonds, yielding C1 and C4 oxidation products. Catalysis by LPMOs requires the reduction of the active-site copper from Cu(II) to Cu(I) by a reducing agent and H(2)O(2) or O(2) as a cosubstrate. Shows endoglucanase activity on tamarind xyloglucan, as well as on beechwood xylan when combined with phosphoric acid swollen cellulose (PASC). Shows no activity on wheat arabinoxylan, konjac glucomannan, acetylated spruce galactoglucomannan, or cellopentaose. The sequence is that of AA9 family lytic polysaccharide monooxygenase E from Thermothielavioides terrestris (strain ATCC 38088 / NRRL 8126) (Thielavia terrestris).